The following is an 84-amino-acid chain: MFTLKKPLLLIVLLGIISLSLCEQERAADEDEGTKIKRRIFSKIGGKAIKNLILKGIKNIGKEVGMDVIRTGIDVAGCKIKGEC.

An N-terminal signal peptide occupies residues 1-22 (MFTLKKPLLLIVLLGIISLSLC). The propeptide at 23 to 36 (EQERAADEDEGTKI) is removed in mature form. The cysteines at positions 78 and 84 are disulfide-linked.

In terms of tissue distribution, expressed by the skin glands.

It is found in the secreted. Its function is as follows. Has antimicrobial activity against Gram-negative bacterium E.coli ATCC 8739 (MIC=3.1 ug), against Gram positive bacteria S.aureus ATCC 6538 (MIC=3.1 ug), methicillin-resistant S.aureus ATCC 43300 (MIC=12.5 ug), B.subtilis ATCC 6633 (MIC=12.5 ug) and against fungus C.albicans ATCC 90028 (MIC=50 ug). The chain is Esculentin-1ISb from Odorrana ishikawae (Ishikawa's frog).